We begin with the raw amino-acid sequence, 1222 residues long: MLVGQGAGPLGPAVVTAAVVLLLSGVGPAHGSEDIVVGCGGFVKSDVEINYSLIEIKLYTKHGTLKYQTDCAPNNGYFMIPLYDKGDFILKIEPPLGWSFEPTTVELHVDGVSDICTKGGDINFVFTGFSVNGKVLSKGQPLGPAGVQVSLRNTGTEAKIQSTVTQPGGKFAFFKVLPGDYEILATHPTWALKEASTTVRVTNSNANAASPLIVAGYNVSGSVRSDGEPMKGVKFLLFSSLVTKEDVLGCNVSPVPGFQPQDESLVYLCYTVSREDGSFSFYSLPSGGYTVIPFYRGERITFDVAPSRLDFTVEHDSLKIEPVFHVMGFSVTGRVLNGPEGDGVPEAVVTLNNQIKVKTKADGSFRLENITTGTYTIHAQKEHLYFETVTIKIAPNTPQLADIIATGFSVCGQISIIRFPDTVKQMNKYKVVLSSQDKDKSLVTVETDAHGSFCFKAKPGTYKVQVMVPEAETRAGLTLKPQTFPLTVTNRPMMDVAFVQFLASVSGKVSCLDTCGDLLVTLQSLSRQGEKRSLQLSGKVNAMTFTFDNVLPGKYKISIMHEDWCWKNKSLEVEVLEDDMSAVEFRQTGYMLRCSLSHAITLEFYQDGNGRENVGIYNLSKGVNRFCLSKPGVYKVTPRSCHRFEQAFYTYDTSSPSILTLTAIRHHVLGTITTDKMMDVTVTIKSSIDSEPALVLGPLKSVQELRREQQLAEIEARRQEREKNGNEEGEERMTKPPVQEMVDELQGPFSYDFSYWARSGEKITVTPSSKELLFYPPSMEAVVSGESCPGKLIEIHGKAGLFLEGQIHPELEGVEIVISEKGASSPLITVFTDDKGAYSVGPLHSDLEYTVTSQKEGYVLTAVEGTIGDFKAYALAGVSFEIKAEDDQPLPGVLLSLSGGLFRSNLLTQDNGILTFSNLSPGQYYFKPMMKEFRFEPSSQMIEVQEGQNLKITITGYRTAYSCYGTVSSLNGEPEQGVAMEAVGQNDCSIYGEDTVTDEEGKFRLRGLLPGCVYHVQLKAEGNDHIERALPHHRVIEVGNNDIDDVNIIVFRQINQFDLSGNVITSSEYLPTLWVKLYKSENLDNPIQTVSLGQSLFFHFPPLLRDGENYVVLLDSTLPRSQYDYILPQVSFTAVGYHKHITLIFNPTRKLPEQDIAQGSYIALPLTLLVLLAGYNHDKLIPLLLQLTSRLQGVRALGQAASDNSGPEDAKRQAKKQKTRRT.

Positions 1–31 are cleaved as a signal peptide; sequence MLVGQGAGPLGPAVVTAAVVLLLSGVGPAHG. Topologically, residues 32 to 1155 are extracellular; the sequence is SEDIVVGCGG…NPTRKLPEQD (1124 aa). N-linked (GlcNAc...) asparagine glycosylation is found at Asn50, Asn218, and Asn618. A helical transmembrane segment spans residues 1156-1176; sequence IAQGSYIALPLTLLVLLAGYN. Topologically, residues 1177–1222 are cytoplasmic; the sequence is HDKLIPLLLQLTSRLQGVRALGQAASDNSGPEDAKRQAKKQKTRRT. Residues 1198-1222 are disordered; the sequence is GQAASDNSGPEDAKRQAKKQKTRRT. Ser1205 carries the post-translational modification Phosphoserine. Basic residues predominate over residues 1213–1222; the sequence is QAKKQKTRRT.

In terms of assembly, component of the back of Sec61 (BOS) complex, composed of NCLN/Nicalin, NOMO (NOMO1, NOMO2 or NOMO3) and TMEM147. The BOS complex is part of the multi-pass translocon (MPT) complex, composed of three subcomplexes, the GEL complex (composed of RAB5IF/OPTI and TMCO1), the BOS complex (composed of NCLN/Nicalin, NOMO and TMEM147) and the PAT complex (composed of WDR83OS/Asterix and CCDC47). The MPT complex associates with the SEC61 complex. Due to the strong similarity between NOMO1, NOMO2 and NOMO3, similar interaction pattern probably occur for the three gene copies. Expressed in colon tumor tissue and in adjacent normal colonic mucosa.

Its subcellular location is the endoplasmic reticulum membrane. Functionally, component of the multi-pass translocon (MPT) complex that mediates insertion of multi-pass membrane proteins into the lipid bilayer of membranes. The MPT complex takes over after the SEC61 complex: following membrane insertion of the first few transmembrane segments of proteins by the SEC61 complex, the MPT complex occludes the lateral gate of the SEC61 complex to promote insertion of subsequent transmembrane regions. The chain is BOS complex subunit NOMO1 (NOMO1) from Homo sapiens (Human).